The primary structure comprises 369 residues: Septin-5 (369 aa).

T13 carries the post-translational modification Phosphothreonine. The region spanning 41 to 314 (KGFDFTLMVA…ENYRAHCIQQ (274 aa)) is the Septin-type G domain. A G1 motif region spans residues 51-58 (GESGLGKS). Residues 51 to 58 (GESGLGKS), T85, and G111 contribute to the GTP site. The interval 108-111 (DTPG) is G3 motif. Omega-N-methylarginine is present on R168. The interval 189–192 (AKAD) is G4 motif. Residue 190–198 (KADCLVPSE) coordinates GTP. Position 225 is a phosphoserine (S225). GTP-binding residues include G248 and R263. S327 carries the post-translational modification Phosphoserine. Residue T336 is modified to Phosphothreonine. The stretch at 338–369 (DAETEKLIRMKDEELRRMQEMLQRMKQQMQDQ) forms a coiled coil.

Belongs to the TRAFAC class TrmE-Era-EngA-EngB-Septin-like GTPase superfamily. Septin GTPase family. Septins polymerize into heterooligomeric protein complexes that form filaments, and can associate with cellular membranes, actin filaments and microtubules. GTPase activity is required for filament formation. Interacts with SEPTIN2 and SEPTIN5. In platelets, associated with a complex containing STX4. Interacts with PRKN; this interaction leads to SEPTIN5 ubiquitination and degradation. Interacts with DYRK1A. Interacts with STX1A; in the cerebellar cortex. In terms of processing, phosphorylated by DYRK1A. In platelets, phosphorylated in response to thrombin, phorbol-12-myristate-13-acetate and collagen. As to expression, expressed at high levels in the CNS, as well as in heart and platelets (at protein level).

It is found in the cytoplasm. Its subcellular location is the cytoskeleton. Filament-forming cytoskeletal GTPase. May play a role in cytokinesis (Potential). May play a role in platelet secretion. The polypeptide is Septin-5 (Homo sapiens (Human)).